The chain runs to 155 residues: Small ribosomal subunit protein uS7cz/uS7cy (155 aa).

Belongs to the universal ribosomal protein uS7 family. In terms of assembly, part of the 30S ribosomal subunit.

Its subcellular location is the plastid. It is found in the chloroplast. Functionally, one of the primary rRNA binding proteins, it binds directly to 16S rRNA where it nucleates assembly of the head domain of the 30S subunit. The polypeptide is Small ribosomal subunit protein uS7cz/uS7cy (rps7-A) (Atropa belladonna (Belladonna)).